The chain runs to 436 residues: Bifunctional IPC transferase and DIPP synthase (436 aa).

Residues G11–A241 form a mobA-like NTP transferase region. CTP contacts are provided by residues L17–A19 and K32. A CDP-alcohol phosphatidyltransferases region spans residues A242–R435. The next 3 membrane-spanning stretches (helical) occupy residues V275–L295, A349–T371, and L397–G417.

The protein in the N-terminal section; belongs to the MobA family. In the C-terminal section; belongs to the CDP-alcohol phosphatidyltransferase class-I family.

The protein resides in the membrane. It carries out the reaction 1D-myo-inositol 3-phosphate + CTP + H(+) = CDP-1L-myo-inositol + diphosphate. The catalysed reaction is CDP-1L-myo-inositol + 1D-myo-inositol 3-phosphate = bis(1L-myo-inositol) 3,1'-phosphate 1-phosphate + CMP + H(+). Its function is as follows. Involved in biosynthesis of di-myo-inositol phosphate (DIP), a widespread organic solute in microorganisms adapted to hot environments. Catalyzes the condensation of CTP and L-myo-inositol-1-phosphate into CDP-L-myo-inositol, as well as the biosynthesis of di-myo-inositol-1,3'-phosphate-1'-phosphate (DIPP) from CDP-L-myo-inositol and L-myo-inositol-1-phosphate. This Rubrobacter xylanophilus (strain DSM 9941 / JCM 11954 / NBRC 16129 / PRD-1) protein is Bifunctional IPC transferase and DIPP synthase.